A 690-amino-acid polypeptide reads, in one-letter code: Long-chain fatty acid transport protein 5 (690 aa).

Residues 1-30 lie on the Cytoplasmic side of the membrane; it reads MGVRQQLALLLLLLLLLWGLGQPVWPVAVA. The next 2 helical transmembrane spans lie at 31–51 and 56–76; these read LTLR…LAML and LGPW…LTLL. Residues 77–690 are Cytoplasmic-facing; it reads PARLPPGLRW…QAVCEGTWRL (614 aa). 292–303 provides a ligand contact to AMP; it reads FIYTSGTTGLPK. Residue S501 is modified to Phosphoserine.

The protein belongs to the ATP-dependent AMP-binding enzyme family. Predominantly expressed in liver.

Its subcellular location is the endoplasmic reticulum membrane. The protein localises to the microsome. It is found in the cell membrane. It catalyses the reaction a fatty acid(in) = a fatty acid(out). The catalysed reaction is cholate + ATP + CoA = choloyl-CoA + AMP + diphosphate. It carries out the reaction chenodeoxycholate + ATP + CoA = chenodeoxycholoyl-CoA + AMP + diphosphate. The enzyme catalyses deoxycholate + ATP + CoA = deoxycholoyl-CoA + AMP + diphosphate. It catalyses the reaction lithocholate + ATP + CoA = lithocholoyl-CoA + AMP + diphosphate. The catalysed reaction is (25R)-3alpha,7alpha,12alpha-trihydroxy-5beta-cholestan-26-oate + ATP + CoA = (25R)-3alpha,7alpha,12alpha-trihydroxy-5beta-cholestan-26-oyl-CoA + AMP + diphosphate. It carries out the reaction a very long-chain fatty acid + ATP + CoA = a very long-chain fatty acyl-CoA + AMP + diphosphate. The enzyme catalyses tetracosanoate + ATP + CoA = tetracosanoyl-CoA + AMP + diphosphate. It catalyses the reaction hexacosanoate + ATP + CoA = hexacosanoyl-CoA + AMP + diphosphate. The catalysed reaction is a long-chain fatty acid + ATP + CoA = a long-chain fatty acyl-CoA + AMP + diphosphate. It carries out the reaction octadecanoate + ATP + CoA = octadecanoyl-CoA + AMP + diphosphate. The enzyme catalyses eicosanoate + ATP + CoA = eicosanoyl-CoA + AMP + diphosphate. With respect to regulation, 3-alpha,7-alpha,12-alpha-trihydroxy-5-beta-cholestanate (THCA) inhibits the activation of cholate. Its function is as follows. May mediate the import of long-chain fatty acids (LCFA) by facilitating their transport across cell membranes. Also catalyzes the ATP-dependent formation of fatty acyl-CoA using LCFA and very-long-chain fatty acids (VLCFA) as substrates. Mainly functions as a bile acyl-CoA synthetase catalyzing the activation of bile acids via ATP-dependent formation of bile acid CoA thioesters which is necessary for their subsequent conjugation with glycine or taurine. Both primary bile acids (cholic acid and chenodeoxycholic acid) and secondary bile acids (deoxycholic acid and lithocholic acid) are the principal substrates. In vitro, activates 3-alpha,7-alpha,12-alpha-trihydroxy-5-beta-cholestanate ((25R)-3alpha,7alpha,12alpha-trihydroxy-5beta-cholestan-26-oate or THCA), the C27 precursor of cholic acid deriving from the de novo synthesis from cholesterol. Plays an important role in hepatic fatty acid uptake and bile acid reconjugation and recycling but not in de novo synthesis of bile acids. The protein is Long-chain fatty acid transport protein 5 (SLC27A5) of Homo sapiens (Human).